We begin with the raw amino-acid sequence, 309 residues long: 4-diphosphocytidyl-2-C-methyl-D-erythritol kinase (309 aa).

The active site involves Lys11. Residue 94-104 participates in ATP binding; that stretch reads PVAAGLAGGSA. Asp136 is an active-site residue.

This sequence belongs to the GHMP kinase family. IspE subfamily.

It catalyses the reaction 4-CDP-2-C-methyl-D-erythritol + ATP = 4-CDP-2-C-methyl-D-erythritol 2-phosphate + ADP + H(+). It participates in isoprenoid biosynthesis; isopentenyl diphosphate biosynthesis via DXP pathway; isopentenyl diphosphate from 1-deoxy-D-xylulose 5-phosphate: step 3/6. Its function is as follows. Catalyzes the phosphorylation of the position 2 hydroxy group of 4-diphosphocytidyl-2C-methyl-D-erythritol. The sequence is that of 4-diphosphocytidyl-2-C-methyl-D-erythritol kinase from Synechococcus sp. (strain JA-3-3Ab) (Cyanobacteria bacterium Yellowstone A-Prime).